Consider the following 69-residue polypeptide: ARECPGKQEWPELVGEYGYKAAAIIERENPNVRSIVKHERSGFTKDFRCDRVWVVVDSTGVVVRTPRVT.

Cys-4 and Cys-49 are joined by a disulfide.

This sequence belongs to the protease inhibitor I13 (potato type I serine protease inhibitor) family.

Its function is as follows. Inhibitor of trypsin, chymotrypsin, subtilisin, etc. The chain is Trypsin/subtilisin inhibitor from Amaranthus caudatus (Love-lies-bleeding).